The chain runs to 199 residues: NAD(P)H dehydrogenase (quinone) (199 aa).

The region spanning 4–190 (MLVLYYSAYG…DDARFQGRRV (187 aa)) is the Flavodoxin-like domain. FMN contacts are provided by residues 10 to 15 (SAYGHM) and 78 to 80 (TRY). Tyr12 contacts NAD(+). Trp98 is a substrate binding site. Residues 113–119 (STATQHG) and His134 each bind FMN. The tract at residues 158-181 (GAPYGMTTTADGDGSRQPSAQELD) is disordered. A compositionally biased stretch (polar residues) spans 163–177 (MTTTADGDGSRQPSA).

It belongs to the WrbA family. The cofactor is FMN.

It catalyses the reaction a quinone + NADH + H(+) = a quinol + NAD(+). It carries out the reaction a quinone + NADPH + H(+) = a quinol + NADP(+). In Brucella ovis (strain ATCC 25840 / 63/290 / NCTC 10512), this protein is NAD(P)H dehydrogenase (quinone).